Consider the following 419-residue polypeptide: Ubiquitin-like modifier-activating enzyme 5 (419 aa).

Residues 18–47 (NRLGNVKKDHPLESSSNSKPTHQPKSPAPY) form a disordered region. Over residues 30 to 41 (ESSSNSKPTHQP) the composition is skewed to polar residues. ATP-binding residues include G94, D115, K138, N161, and N194. C236 and C239 together coordinate Zn(2+). C260 acts as the Glycyl thioester intermediate in catalysis. 2 residues coordinate Zn(2+): C313 and C318.

The protein belongs to the ubiquitin-activating E1 family. UBA5 subfamily. Interacts with ufc-1. Expressed in the intestine.

Functionally, E1-like enzyme which activates ufm-1. Required for interaction between ufm-1 and ufc-1. The polypeptide is Ubiquitin-like modifier-activating enzyme 5 (Caenorhabditis elegans).